Here is a 147-residue protein sequence, read N- to C-terminus: Hemoglobin subunit beta (147 aa).

N-acetylvaline is present on V2. Residues 3–147 (HLTPEEKSAV…VANALAHKYH (145 aa)) enclose the Globin domain. At T13 the chain carries Phosphothreonine. Phosphoserine is present on S45. N6-acetyllysine is present on K60. H64 contacts heme b. K83 carries the post-translational modification N6-acetyllysine. H93 provides a ligand contact to heme b. Position 94 is an S-nitrosocysteine (C94). K145 carries the N6-acetyllysine modification.

The protein belongs to the globin family. In terms of assembly, heterotetramer of two alpha chains and two beta chains. In terms of tissue distribution, red blood cells.

Its function is as follows. Involved in oxygen transport from the lung to the various peripheral tissues. The polypeptide is Hemoglobin subunit beta (HBB) (Gorilla gorilla gorilla (Western lowland gorilla)).